The chain runs to 101 residues: Small ribosomal subunit protein uS14 (101 aa).

It belongs to the universal ribosomal protein uS14 family. Part of the 30S ribosomal subunit. Contacts proteins S3 and S10.

Binds 16S rRNA, required for the assembly of 30S particles and may also be responsible for determining the conformation of the 16S rRNA at the A site. The polypeptide is Small ribosomal subunit protein uS14 (Buchnera aphidicola subsp. Baizongia pistaciae (strain Bp)).